The sequence spans 475 residues: UDP-N-acetylmuramate--L-alanine ligase (475 aa).

Glycine 118 to threonine 124 is a binding site for ATP.

Belongs to the MurCDEF family.

Its subcellular location is the cytoplasm. The catalysed reaction is UDP-N-acetyl-alpha-D-muramate + L-alanine + ATP = UDP-N-acetyl-alpha-D-muramoyl-L-alanine + ADP + phosphate + H(+). The protein operates within cell wall biogenesis; peptidoglycan biosynthesis. In terms of biological role, cell wall formation. This Thermosynechococcus vestitus (strain NIES-2133 / IAM M-273 / BP-1) protein is UDP-N-acetylmuramate--L-alanine ligase.